The primary structure comprises 274 residues: 3-methyl-2-oxobutanoate hydroxymethyltransferase (274 aa).

Asp-49 and Asp-88 together coordinate Mg(2+). 3-methyl-2-oxobutanoate contacts are provided by residues 49–50, Asp-88, and Lys-118; that span reads DS. Residue Glu-120 participates in Mg(2+) binding. Glu-187 (proton acceptor) is an active-site residue.

This sequence belongs to the PanB family. In terms of assembly, homodecamer; pentamer of dimers. It depends on Mg(2+) as a cofactor.

The protein localises to the cytoplasm. The enzyme catalyses 3-methyl-2-oxobutanoate + (6R)-5,10-methylene-5,6,7,8-tetrahydrofolate + H2O = 2-dehydropantoate + (6S)-5,6,7,8-tetrahydrofolate. It participates in cofactor biosynthesis; (R)-pantothenate biosynthesis; (R)-pantoate from 3-methyl-2-oxobutanoate: step 1/2. In terms of biological role, catalyzes the reversible reaction in which hydroxymethyl group from 5,10-methylenetetrahydrofolate is transferred onto alpha-ketoisovalerate to form ketopantoate. In Rhodopseudomonas palustris (strain TIE-1), this protein is 3-methyl-2-oxobutanoate hydroxymethyltransferase.